The primary structure comprises 301 residues: uncharacterized protein (301 aa).

The protein belongs to the asfivirus E301R family. As to quaternary structure, interacts with host IRF3.

Functionally, plays a role in the inhibition of host innate immune system by acting as a negatively regulator of type I interferon production. Mechanistically, interacts with and prevents host IRF3 nuclear localization to inhibit its transcriptional activity. This is an uncharacterized protein from African swine fever virus (isolate Tick/South Africa/Pretoriuskop Pr4/1996) (ASFV).